We begin with the raw amino-acid sequence, 425 residues long: Serine--tRNA ligase (425 aa).

233–235 (TAE) serves as a coordination point for L-serine. 264–266 (RAE) serves as a coordination point for ATP. E287 contributes to the L-serine binding site. 351-354 (EISS) serves as a coordination point for ATP. Position 387 (S387) interacts with L-serine.

This sequence belongs to the class-II aminoacyl-tRNA synthetase family. Type-1 seryl-tRNA synthetase subfamily. Homodimer. The tRNA molecule binds across the dimer.

The protein resides in the cytoplasm. The catalysed reaction is tRNA(Ser) + L-serine + ATP = L-seryl-tRNA(Ser) + AMP + diphosphate + H(+). It carries out the reaction tRNA(Sec) + L-serine + ATP = L-seryl-tRNA(Sec) + AMP + diphosphate + H(+). It participates in aminoacyl-tRNA biosynthesis; selenocysteinyl-tRNA(Sec) biosynthesis; L-seryl-tRNA(Sec) from L-serine and tRNA(Sec): step 1/1. Catalyzes the attachment of serine to tRNA(Ser). Is also able to aminoacylate tRNA(Sec) with serine, to form the misacylated tRNA L-seryl-tRNA(Sec), which will be further converted into selenocysteinyl-tRNA(Sec). This Clostridium perfringens (strain SM101 / Type A) protein is Serine--tRNA ligase.